The sequence spans 237 residues: MTPHINAPAGAFAETVLFCGDPLRAQFIAHHFLKNAQEITNVRAMLGFTGEYQQHKLSVMGHGMGIPSCSIYAKELITEYGVKNLIRVGSCGAVLDEIKLHDVIIALSAATDSNVNRLRFRHYDFAATADYSIFSALIAAAAQQNITARVGTVFSTDSFYHADTELMDLLKRFHILGVEMEAAGLFGVAAEYGARAGCILTVSDHILRQETTTALERQTRFHDMITIALEAAVRLAH.

Residue histidine 4 coordinates a purine D-ribonucleoside. Phosphate-binding positions include glycine 20, arginine 24, arginine 43, and 87-90 (RVGS). Residues 179–181 (EME) and 203–204 (SD) each bind a purine D-ribonucleoside. Catalysis depends on aspartate 204, which acts as the Proton donor.

The protein belongs to the PNP/UDP phosphorylase family. As to quaternary structure, homohexamer; trimer of homodimers.

It catalyses the reaction a purine D-ribonucleoside + phosphate = a purine nucleobase + alpha-D-ribose 1-phosphate. The enzyme catalyses a purine 2'-deoxy-D-ribonucleoside + phosphate = a purine nucleobase + 2-deoxy-alpha-D-ribose 1-phosphate. Functionally, catalyzes the reversible phosphorolytic breakdown of the N-glycosidic bond in the beta-(deoxy)ribonucleoside molecules, with the formation of the corresponding free purine bases and pentose-1-phosphate. This is Purine nucleoside phosphorylase DeoD-type from Dichelobacter nodosus (strain VCS1703A).